The chain runs to 63 residues: MAHPKAKVSKSRRDKRRAQFNARTKAATTVNCPNCGEPTLPHRACRHCGHYRGRAVVAKAANS.

The segment covering 1–18 (MAHPKAKVSKSRRDKRRA) has biased composition (basic residues). The tract at residues 1-25 (MAHPKAKVSKSRRDKRRAQFNARTK) is disordered.

The protein belongs to the bacterial ribosomal protein bL32 family.

This Chlorobium phaeovibrioides (strain DSM 265 / 1930) (Prosthecochloris vibrioformis (strain DSM 265)) protein is Large ribosomal subunit protein bL32.